The primary structure comprises 241 residues: 3-deoxy-D-manno-octulosonic acid kinase (241 aa).

The active site involves aspartate 171.

It belongs to the protein kinase superfamily. KdkA/RfaP family.

It localises to the cell inner membrane. It carries out the reaction an alpha-Kdo-(2-&gt;6)-lipid IVA + ATP = a 4-O-phospho-alpha-Kdo-(2-&gt;6)-lipid IVA + ADP + H(+). The protein operates within bacterial outer membrane biogenesis; LPS core biosynthesis. Functionally, catalyzes the ATP-dependent phosphorylation of the 3-deoxy-D-manno-octulosonic acid (Kdo) residue in Kdo-lipid IV(A) at the 4-OH position. The chain is 3-deoxy-D-manno-octulosonic acid kinase from Haemophilus influenzae (strain 86-028NP).